A 527-amino-acid chain; its full sequence is Amine oxidase [flavin-containing] A (527 aa).

Residue methionine 1 is modified to N-acetylmethionine. Over 1-497 (MENQEKASIA…HTFWERNLPS (497 aa)) the chain is Cytoplasmic. Serine 383 carries the post-translational modification Phosphoserine. Cysteine 406 is subject to S-8alpha-FAD cysteine. A helical; Anchor for type IV membrane protein membrane pass occupies residues 498–518 (VSGLLKIIGFSTSVTALGFVL). The Mitochondrial intermembrane portion of the chain corresponds to 519–527 (YKYKLLPRS). Residues 520-522 (KYK) are interaction with membrane phospholipid headgroups.

It belongs to the flavin monoamine oxidase family. In terms of assembly, monomer, homo- or heterodimer (containing two subunits of similar size). Each subunit contains a covalently bound flavin. Enzymatically active as monomer. Requires FAD as cofactor.

Its subcellular location is the mitochondrion outer membrane. The catalysed reaction is a secondary aliphatic amine + O2 + H2O = a primary amine + an aldehyde + H2O2. It carries out the reaction a primary methyl amine + O2 + H2O = an aldehyde + H2O2 + NH4(+). The enzyme catalyses (R)-adrenaline + O2 + H2O = (R)-3,4-dihydroxymandelaldehyde + methylamine + H2O2. It catalyses the reaction dopamine + O2 + H2O = 3,4-dihydroxyphenylacetaldehyde + H2O2 + NH4(+). The catalysed reaction is tyramine + O2 + H2O = (4-hydroxyphenyl)acetaldehyde + H2O2 + NH4(+). It carries out the reaction (R)-noradrenaline + O2 + H2O = (R)-3,4-dihydroxymandelaldehyde + H2O2 + NH4(+). The enzyme catalyses serotonin + O2 + H2O = (5-hydroxyindol-3-yl)acetaldehyde + H2O2 + NH4(+). It catalyses the reaction kynuramine + O2 + H2O = 3-(2-aminophenyl)-3-oxopropanal + H2O2 + NH4(+). The catalysed reaction is tryptamine + O2 + H2O = indole-3-acetaldehyde + H2O2 + NH4(+). It carries out the reaction 2-phenylethylamine + O2 + H2O = 2-phenylacetaldehyde + H2O2 + NH4(+). Functionally, catalyzes the oxidative deamination of primary and some secondary amine such as neurotransmitters, with concomitant reduction of oxygen to hydrogen peroxide and has important functions in the metabolism of neuroactive and vasoactive amines in the central nervous system and peripheral tissues. Preferentially oxidizes serotonin. Also catalyzes the oxidative deamination of kynuramine to 3-(2-aminophenyl)-3-oxopropanal that can spontaneously condense to 4-hydroxyquinoline. In Pongo abelii (Sumatran orangutan), this protein is Amine oxidase [flavin-containing] A.